The sequence spans 460 residues: Arginine biosynthesis bifunctional protein ArgJ, chloroplastic (460 aa).

The transit peptide at 1 to 26 (MYLSVPHYPSLKFTAFQSHKRNFRVF) directs the protein to the chloroplast. Thr202, Lys228, Thr239, Glu328, Asn455, and Thr460 together coordinate substrate. Thr239 functions as the Nucleophile in the catalytic mechanism.

It belongs to the ArgJ family. As to quaternary structure, heterodimer of an alpha and a beta chain.

Its subcellular location is the plastid. It localises to the chloroplast. It catalyses the reaction N(2)-acetyl-L-ornithine + L-glutamate = N-acetyl-L-glutamate + L-ornithine. It carries out the reaction L-glutamate + acetyl-CoA = N-acetyl-L-glutamate + CoA + H(+). Its pathway is amino-acid biosynthesis; L-arginine biosynthesis; L-ornithine and N-acetyl-L-glutamate from L-glutamate and N(2)-acetyl-L-ornithine (cyclic): step 1/1. It participates in amino-acid biosynthesis; L-arginine biosynthesis; N(2)-acetyl-L-ornithine from L-glutamate: step 1/4. Its function is as follows. Catalyzes two activities which are involved in the cyclic version of arginine biosynthesis: the synthesis of acetylglutamate from glutamate and acetyl-CoA, and of ornithine by transacetylation between acetylornithine and glutamate. This is Arginine biosynthesis bifunctional protein ArgJ, chloroplastic from Citrullus lanatus (Watermelon).